Here is a 294-residue protein sequence, read N- to C-terminus: Foldase protein PrsA 1 (294 aa).

Positions 1-21 (MTKLKKVMISLVAATLLLLAG) are cleaved as a signal peptide. Residue C22 is the site of N-palmitoyl cysteine attachment. C22 is lipidated: S-diacylglycerol cysteine. Positions 135 to 226 (EPNITVRHIL…YGYHLIQLVK (92 aa)) constitute a PpiC domain.

This sequence belongs to the PrsA family.

The protein localises to the cell membrane. The catalysed reaction is [protein]-peptidylproline (omega=180) = [protein]-peptidylproline (omega=0). In terms of biological role, plays a major role in protein secretion by helping the post-translocational extracellular folding of several secreted proteins. The protein is Foldase protein PrsA 1 (prsA1) of Listeria innocua serovar 6a (strain ATCC BAA-680 / CLIP 11262).